Consider the following 369-residue polypeptide: Serine/threonine-protein kinase srb10 (369 aa).

A Protein kinase domain is found at 5-319 (YKIIGFISSG…AKQALEHVFF (315 aa)). ATP is bound by residues 11 to 19 (ISSGTYGKV) and K36. D140 functions as the Proton acceptor in the catalytic mechanism.

The protein belongs to the protein kinase superfamily. CMGC Ser/Thr protein kinase family. CDC2/CDKX subfamily. As to quaternary structure, component of the Cdk8 module of the Mediator complex. The Cdk8 module is composed of srb8, srb9, srb10 and srb11. Interacts with med17 and med18.

Its subcellular location is the nucleus. The enzyme catalyses L-seryl-[protein] + ATP = O-phospho-L-seryl-[protein] + ADP + H(+). It carries out the reaction L-threonyl-[protein] + ATP = O-phospho-L-threonyl-[protein] + ADP + H(+). It catalyses the reaction [DNA-directed RNA polymerase] + ATP = phospho-[DNA-directed RNA polymerase] + ADP + H(+). Functionally, catalytic component of the Cdk8 module/Srb8-11 module which is a regulatory module of the Mediator complex that regulates basal RNA polymerase II transcription. The Cdk8 module may sterically hinder the interaction between Mediator and RNA polymerase II leading to transcriptional repression of a subset of genes regulated by Mediator. The chain is Serine/threonine-protein kinase srb10 (srb10) from Schizosaccharomyces pombe (strain 972 / ATCC 24843) (Fission yeast).